The primary structure comprises 1371 residues: DNA-directed RNA polymerase subunit beta (1371 aa).

Belongs to the RNA polymerase beta chain family. In terms of assembly, the RNAP catalytic core consists of 2 alpha, 1 beta, 1 beta' and 1 omega subunit. When a sigma factor is associated with the core the holoenzyme is formed, which can initiate transcription.

It catalyses the reaction RNA(n) + a ribonucleoside 5'-triphosphate = RNA(n+1) + diphosphate. Its function is as follows. DNA-dependent RNA polymerase catalyzes the transcription of DNA into RNA using the four ribonucleoside triphosphates as substrates. This chain is DNA-directed RNA polymerase subunit beta, found in Citrifermentans bemidjiense (strain ATCC BAA-1014 / DSM 16622 / JCM 12645 / Bem) (Geobacter bemidjiensis).